Reading from the N-terminus, the 451-residue chain is Ammonium transporter Rh type B (451 aa).

The Cytoplasmic segment spans residues 1–11 (MADVSTSMRLK). The helical transmembrane segment at 12–32 (LPVVCFILEIILIILFGALVQ) threads the bilayer. Over 33 to 63 (YDYETDAKEWHNQSHNDYENDFYFRYPSFQD) the chain is Extracellular. A glycan (N-linked (GlcNAc...) asparagine) is linked at asparagine 44. The helical transmembrane segment at 64–84 (VHVMIFIGFGFLMTFLQKYGF) threads the bilayer. The Cytoplasmic portion of the chain corresponds to 85–87 (GSV). A helical membrane pass occupies residues 88 to 108 (GFNFLIAAFSLQWATLMQGFF). Residues 109–121 (HGMHGGKIHVGVE) are Extracellular-facing. A helical transmembrane segment spans residues 122–142 (SMINADFCTGSVLISFGAVLG). The Cytoplasmic portion of the chain corresponds to 143 to 151 (KTSPIQLLT). The chain crosses the membrane as a helical span at residues 152–172 (MAMFEVTLFAVNEFILLSLLG). The Extracellular portion of the chain corresponds to 173 to 176 (TRDA). A helical transmembrane segment spans residues 177-197 (GGSMTIHTFGAYFGLMVTRIL). Topologically, residues 198–216 (YRPHLDKSKHRNSSVYHSD) are cytoplasmic. Residues 217–237 (LFAMIGTIYLWMFWPSFNSAI) traverse the membrane as a helical segment. Residues 238 to 247 (TAHGDDQHRT) are Extracellular-facing. A helical membrane pass occupies residues 248-270 (ALNTYYSLAACTLATYGMSAVTS). The Cytoplasmic portion of the chain corresponds to 271 to 274 (HDGK). Residues 275 to 295 (LDMVHIQNAALAGGVAVGTAG) form a helical membrane-spanning segment. Residues 296–298 (EMM) are Extracellular-facing. The chain crosses the membrane as a helical span at residues 299 to 319 (LTPFGSMIVGFLAGIISVLGF). Residues 320–340 (KFLSPILESKLKIQDTCGVHN) lie on the Cytoplasmic side of the membrane. The helical transmembrane segment at 341–361 (LHGMPGVLGAIVGAVTAALAT) threads the bilayer. The Extracellular segment spans residues 362 to 390 (MDVYGKGMEDVFPAVADGSIDASKQGGVQ). Residues 391–411 (ALSLAITLGIALLGGLIVVFG) form a helical membrane-spanning segment. Topologically, residues 412–451 (TPPDTLCFEDGVYWEVPESEAPHEAQLTTVRTEETEKLSS) are cytoplasmic.

The protein belongs to the ammonium transporter (TC 2.A.49) family. Rh subfamily.

It is found in the basolateral cell membrane. It localises to the cytoplasmic vesicle membrane. Functionally, functions as an ammonia transporter. May play a role in the elimination of ammonia in the gill. In Tetraodon nigroviridis (Spotted green pufferfish), this protein is Ammonium transporter Rh type B (rhbg).